The chain runs to 718 residues: MSKVVYEGWMVRYGRRKIGRSYIHMRYFVLEPRLLAYYKKKPQDYQVPIKTMLIDGNCRVEDRGLKTHHGHMVYVLSVYNKKEKSHRITMAAFNIQEALMWKEKIESVIDQHQESQVPNGQQYVSFEYKSGMDTGRTASSSDHESQFSAAEDEEDSRRSLMRRTTIGNGPPESVLDWTKEFDAELANQNSDNQAFSRKHWRLLQCQNGLRIFEELLEVDYLPRSCSRAMKAVGVVEATCEEIFELLMSMDGTRYEWDCSFQFGSLVEEVDGHTAVLYHRLLLDWFPMIVWPRDLCYVRYWRRNDDGSYVVLFRSREHENCGPQPGCVRAHLESGGYNISPLKPRNGRPRTQVQHLIQIDLKGWGAGYLPAFQQHCLLQMLNSVAGLREWFSQTDERGVHTRIPVMVNMASSSLSLTKSGKSLHKSAFSLDQTNSVNRNSLLMDEDSDDDDEFQIAESEQEPETSKPETDVKRPEEEPAHNIDLSCFSGNLKRNENENARNCWRISDGNNFKVRGKNFGQEKRKIPAGKHLMDLVAVDWFKDSKRIDHVARRKGCAAQVAAEKGLFSMVVNVQVPGSTHYSMVFYFVMKELVPGSLLQRFVDGDDEFRNSRLKLIPLVPKGSWIVRQSVGSTPCLLGKAVDCNYIRGPTYLEIDVDIGSSTVANGVLGLVIGVITSLVVEMAFLVQANTAEEQPERLIGAVRVSHIELSSAIVPNLESE.

Residues lysine 3–aspartate 110 enclose the PH domain. Residues threonine 134–valine 174 form a disordered region. Positions glutamate 180–glutamine 392 constitute an START domain. Residues arginine 437–leucine 483 are disordered. The span at methionine 442 to proline 461 shows a compositional bias: acidic residues. Residues glutamate 462–histidine 479 show a composition bias toward basic and acidic residues. Residues glycine 664 to valine 684 traverse the membrane as a helical segment.

As to expression, expressed ubiquitously in all tissues and organs, including leaves, roots, flowers, stems and siliques.

It localises to the endoplasmic reticulum membrane. The protein localises to the cell membrane. It is found in the endosome membrane. Its function is as follows. Negative regulator of the salicylic acid- (SA-) mediated resistance to pathogens, including the biotrophic powdery mildew pathogens Golovinomyces cichoracearum and Blumeria graminis, and the downy mildew pathogen Hyaloperonospora parasitica, probably by limiting the initiation of cell death and the establishment of the hypersensitive response (HR). Prevents ethylene-induced senescence. Binds to phosphatidylinositol-4-phosphate (PtdIns(4)P) in vitro. This chain is Protein ENHANCED DISEASE RESISTANCE 2 (EDR2), found in Arabidopsis thaliana (Mouse-ear cress).